A 190-amino-acid polypeptide reads, in one-letter code: Segregation and condensation protein B (190 aa).

Belongs to the ScpB family. In terms of assembly, homodimer. Homodimerization may be required to stabilize the binding of ScpA to the Smc head domains. Component of a cohesin-like complex composed of ScpA, ScpB and the Smc homodimer, in which ScpA and ScpB bind to the head domain of Smc. The presence of the three proteins is required for the association of the complex with DNA.

The protein localises to the cytoplasm. Participates in chromosomal partition during cell division. May act via the formation of a condensin-like complex containing Smc and ScpA that pull DNA away from mid-cell into both cell halves. In Alkaliphilus metalliredigens (strain QYMF), this protein is Segregation and condensation protein B.